The chain runs to 510 residues: MSKRALISVTDKTGVVEFAKELNKLDYEIISTGNTFKTLKENGVNVMQVEDVTNFPEILDGRVKTLNPYIHGGILYKRDKESHVETVNEHKIHSIDLVAVNLYDFEGTLKAGKSHDEIIENIDIGGPSMIRSAAKNYKDVIVVVDIKDYDSIIEKLKTDTMTLEDRKKLSYKAFSTTGRYDALISSYFAGEVGDTYPDILNLTFQKEQTLRYGENPHQNGFLYSQSNAKNPILNYEQLGGKELSFNNLNDLHGCLEVMREFKDSEEVVSVAIKHANSCGVGLGKDAFEAYTKCYEADKVSIFGGIVGITSTIDKATAEKLNEIFLEIVVAYDFEPEALEILKQKKNLRILKLAKIENSLQPYEMKYLDGKLLIQDRNNILAEKSENVTKEKPTDAQLKDMEFGMRVVKNMKSNAIAIVKNGQTLALGCGQTSRIWALKNALENNKDKDFTGAVLASDAFFPFDDCVTLAHEYGISAVVQPGGSIKDKDSIEACDKYDMVMVFTGIRHFKH.

Residues 1–144 (MSKRALISVT…KNYKDVIVVV (144 aa)) enclose the MGS-like domain.

The protein belongs to the PurH family.

It catalyses the reaction (6R)-10-formyltetrahydrofolate + 5-amino-1-(5-phospho-beta-D-ribosyl)imidazole-4-carboxamide = 5-formamido-1-(5-phospho-D-ribosyl)imidazole-4-carboxamide + (6S)-5,6,7,8-tetrahydrofolate. The enzyme catalyses IMP + H2O = 5-formamido-1-(5-phospho-D-ribosyl)imidazole-4-carboxamide. The protein operates within purine metabolism; IMP biosynthesis via de novo pathway; 5-formamido-1-(5-phospho-D-ribosyl)imidazole-4-carboxamide from 5-amino-1-(5-phospho-D-ribosyl)imidazole-4-carboxamide (10-formyl THF route): step 1/1. It participates in purine metabolism; IMP biosynthesis via de novo pathway; IMP from 5-formamido-1-(5-phospho-D-ribosyl)imidazole-4-carboxamide: step 1/1. The protein is Bifunctional purine biosynthesis protein PurH of Clostridioides difficile (strain 630) (Peptoclostridium difficile).